Reading from the N-terminus, the 88-residue chain is Small ribosomal subunit protein bS16 (88 aa).

This sequence belongs to the bacterial ribosomal protein bS16 family.

The sequence is that of Small ribosomal subunit protein bS16 from Pelotomaculum thermopropionicum (strain DSM 13744 / JCM 10971 / SI).